We begin with the raw amino-acid sequence, 293 residues long: Histamine N-methyltransferase B (293 aa).

Glu-28 lines the substrate pocket. S-adenosyl-L-methionine is bound by residues Gly-60, Glu-89, Gln-94, Ser-120, and Ile-142. Position 283 (Asn-283) interacts with substrate.

This sequence belongs to the class I-like SAM-binding methyltransferase superfamily. HNMT family. Monomer.

The protein localises to the cytoplasm. It catalyses the reaction histamine + S-adenosyl-L-methionine = N(tau)-methylhistamine + S-adenosyl-L-homocysteine + H(+). Inactivates histamine by N-methylation. Plays an important role in degrading histamine and in regulating the airway response to histamine. The sequence is that of Histamine N-methyltransferase B (hnmt-b) from Xenopus laevis (African clawed frog).